The following is a 789-amino-acid chain: Alpha-glucosidase 2 (789 aa).

Disordered stretches follow at residues 1-24 (MTGL…PRVI) and 512-531 (ELNP…ASHP). Asp-523 serves as the catalytic Proton donor. Glu-756 (proton acceptor) is an active-site residue.

It belongs to the glycosyl hydrolase 63 family.

It participates in glycan metabolism; N-glycan degradation. The chain is Alpha-glucosidase 2 (GCS2) from Arabidopsis thaliana (Mouse-ear cress).